The following is a 225-amino-acid chain: UPF0758 protein Bpet3149 (225 aa).

In terms of domain architecture, MPN spans 103 to 225 (AMSEPGSVKR…VVSMAELGLL (123 aa)). Zn(2+)-binding residues include His-174, His-176, and Asp-187. A JAMM motif motif is present at residues 174–187 (HNHPSGSAQPSQAD).

Belongs to the UPF0758 family.

This chain is UPF0758 protein Bpet3149, found in Bordetella petrii (strain ATCC BAA-461 / DSM 12804 / CCUG 43448).